Consider the following 199-residue polypeptide: Probable cobalt-precorrin-6B C(15)-methyltransferase (decarboxylating) (199 aa).

S-adenosyl-L-methionine is bound by residues threonine 24, 48 to 52, aspartate 72, and alanine 101; that span reads GCGTG.

It belongs to the methyltransferase superfamily. Archaeal-type CbiT family.

It catalyses the reaction Co-precorrin-6B + S-adenosyl-L-methionine = Co-precorrin-7 + S-adenosyl-L-homocysteine + CO2. The protein operates within cofactor biosynthesis; adenosylcobalamin biosynthesis; cob(II)yrinate a,c-diamide from sirohydrochlorin (anaerobic route): step 8/10. In terms of biological role, catalyzes the methylation of C-15 in cobalt-precorrin-6B followed by the decarboxylation of C-12 to form cobalt-precorrin-7. The protein is Probable cobalt-precorrin-6B C(15)-methyltransferase (decarboxylating) of Saccharolobus islandicus (strain L.S.2.15 / Lassen #1) (Sulfolobus islandicus).